A 190-amino-acid chain; its full sequence is Small ribosomal subunit protein uS4c (190 aa).

In terms of domain architecture, S4 RNA-binding spans 92 to 152 (RLDHVVYRAG…KSPSSAQLPP (61 aa)).

This sequence belongs to the universal ribosomal protein uS4 family. In terms of assembly, part of the 30S ribosomal subunit. Contacts protein S5. The interaction surface between S4 and S5 is involved in control of translational fidelity.

The protein resides in the plastid. Its subcellular location is the chloroplast. Functionally, one of the primary rRNA binding proteins, it binds directly to 16S rRNA where it nucleates assembly of the body of the 30S subunit. In terms of biological role, with S5 and S12 plays an important role in translational accuracy. This is Small ribosomal subunit protein uS4c (rps4) from Cyanidioschyzon merolae (strain NIES-3377 / 10D) (Unicellular red alga).